We begin with the raw amino-acid sequence, 404 residues long: uncharacterized protein (404 aa).

Transmembrane regions (helical) follow at residues 15-35, 43-63, 84-104, 121-141, 154-174, 187-207, 231-251, 279-299, 316-336, 338-358, and 373-393; these read WSLL…PGFL, NTLA…DIFA, MVLP…GLAF, GITP…IFVI, IAGF…APPV, ISIF…ITFA, VVGI…VLGV, IFGL…AYTS, GIII…GQPA, ILVL…GTLL, and PLWL…MGIY.

This sequence belongs to the NRAMP family.

The protein localises to the cell membrane. This is an uncharacterized protein from Bacillus subtilis (strain 168).